Reading from the N-terminus, the 729-residue chain is Zorya protein ZorA (729 aa).

Helical transmembrane passes span 20–40 (PATV…FYFF), 135–155 (LPGI…MIGL), and 177–197 (VLYA…ITWL).

This sequence belongs to the MotA family.

It is found in the cell inner membrane. Its function is as follows. Component of antiviral defense system Zorya type I, composed of ZorA, ZorB, ZorC and ZorD. Expression of Zorya type I in E.coli (strain MG1655) confers 10,000-fold resistance to phage SECphi27, 100-fold resistance to lambda, and 10-fold resistance to T7. While most T7 infected Zorya-containing cells undergo abortive infection, a minority produce viable phage progeny. These eventually accumulate to a high multiplicity of infection, leading to culture collapse by 2 hours after initial infection. ZorA and ZorB probably assemble in the cell inner membrane and exert their effect there. The chain is Zorya protein ZorA from Escherichia coli O139:H28 (strain E24377A / ETEC).